Reading from the N-terminus, the 130-residue chain is Lysozyme C (130 aa).

Positions 1–130 (KIYERCELAR…LTPYIRGCGV (130 aa)) constitute a C-type lysozyme domain. Cystine bridges form between C6-C128, C30-C116, C65-C81, and C77-C95. Catalysis depends on residues E35 and D53.

This sequence belongs to the glycosyl hydrolase 22 family. In terms of assembly, monomer.

The protein localises to the secreted. It carries out the reaction Hydrolysis of (1-&gt;4)-beta-linkages between N-acetylmuramic acid and N-acetyl-D-glucosamine residues in a peptidoglycan and between N-acetyl-D-glucosamine residues in chitodextrins.. Its function is as follows. Lysozymes have primarily a bacteriolytic function; those in tissues and body fluids are associated with the monocyte-macrophage system and enhance the activity of immunoagents. The protein is Lysozyme C (LYZ) of Oryctolagus cuniculus (Rabbit).